A 337-amino-acid chain; its full sequence is Anthranilate phosphoribosyltransferase (337 aa).

5-phospho-alpha-D-ribose 1-diphosphate-binding positions include Gly81, 84 to 85 (GD), Ser89, 91 to 94 (NVST), 109 to 117 (KHGNRAATS), and Ala121. An anthranilate-binding site is contributed by Gly81. Residue Ser93 coordinates Mg(2+). Asn112 contributes to the anthranilate binding site. Arg167 is a binding site for anthranilate. Positions 226 and 227 each coordinate Mg(2+).

It belongs to the anthranilate phosphoribosyltransferase family. As to quaternary structure, homodimer. It depends on Mg(2+) as a cofactor.

It catalyses the reaction N-(5-phospho-beta-D-ribosyl)anthranilate + diphosphate = 5-phospho-alpha-D-ribose 1-diphosphate + anthranilate. It participates in amino-acid biosynthesis; L-tryptophan biosynthesis; L-tryptophan from chorismate: step 2/5. Its function is as follows. Catalyzes the transfer of the phosphoribosyl group of 5-phosphorylribose-1-pyrophosphate (PRPP) to anthranilate to yield N-(5'-phosphoribosyl)-anthranilate (PRA). This is Anthranilate phosphoribosyltransferase from Methylorubrum populi (strain ATCC BAA-705 / NCIMB 13946 / BJ001) (Methylobacterium populi).